Consider the following 245-residue polypeptide: Fibroblast growth factor 3 (245 aa).

The signal sequence occupies residues 1-17; that stretch reads MGLIWLLLLSLLEPSWP. Asparagine 65 carries an N-linked (GlcNAc...) asparagine glycan. Disordered stretches follow at residues 137–181 and 195–245; these read GSSG…FLPR and QSSQ…LAVA. A compositionally biased stretch (basic residues) spans 161-173; sequence GRPRRGFKTRRTQ. The span at 226 to 238 shows a compositional bias: polar residues; the sequence is TLSTRATPSTQLH.

It belongs to the heparin-binding growth factors family. In terms of assembly, interacts with FGFR1 and FGFR2. Affinity between fibroblast growth factors (FGFs) and their receptors is increased by heparan sulfate glycosaminoglycans that function as coreceptors. Post-translationally, glycosylated.

The protein localises to the nucleus. The protein resides in the endoplasmic reticulum. Its subcellular location is the golgi apparatus. In terms of biological role, plays an important role in the regulation of embryonic development, cell proliferation, and cell differentiation. Required for normal ear development. The chain is Fibroblast growth factor 3 (Fgf3) from Mus musculus (Mouse).